Reading from the N-terminus, the 1231-residue chain is Cohesin subunit SA-2 (1231 aa).

N-acetylmethionine is present on M1. The interval 1-75 (MIAAPEIPTD…GSNRMNGHHQ (75 aa)) is disordered. Positions 36-48 (KQGKGKTCKKGKK) are enriched in basic residues. Residues 293–378 (FVHRYRDAIA…SRFKDRIVSM (86 aa)) form the SCD domain. K607 carries the N6-acetyllysine modification. A phosphoserine mark is found at S1058, S1061, S1064, and S1065. Residues 1062-1087 (GMSSRGSTVRSKKSKPSTGKRKVVEG) form a disordered region. Positions 1071–1082 (RSKKSKPSTGKR) are enriched in basic residues. The residue at position 1112 (T1112) is a Phosphothreonine. Phosphoserine occurs at positions 1177 and 1178.

The protein belongs to the SCC3 family. Interacts directly with RAD21 in cohesin complex. Cohesin complexes are composed of a heterodimer between a SMC1 protein (SMC1A or SMC1B) and SMC3, which are attached via their hinge domain, and RAD21 which link them at their heads, and one STAG protein (STAG1, STAG2 or STAG3). In cohesin complexes, STAG2 is mutually exclusive with STAG1 and STAG3. Post-translationally, phosphorylated by PLK1. The large dissociation of cohesin from chromosome arms during prophase is partly due to its phosphorylation.

Its subcellular location is the nucleus. The protein resides in the chromosome. It is found in the centromere. Component of cohesin complex, a complex required for the cohesion of sister chromatids after DNA replication. The cohesin complex apparently forms a large proteinaceous ring within which sister chromatids can be trapped. At anaphase, the complex is cleaved and dissociates from chromatin, allowing sister chromatids to segregate. The cohesin complex may also play a role in spindle pole assembly during mitosis. The chain is Cohesin subunit SA-2 (Stag2) from Mus musculus (Mouse).